The sequence spans 332 residues: Protein pelota homolog (332 aa).

Belongs to the eukaryotic release factor 1 family. Pelota subfamily. In terms of assembly, monomer. A divalent metal cation serves as cofactor.

Its subcellular location is the cytoplasm. Its function is as follows. May function in recognizing stalled ribosomes, interact with stem-loop structures in stalled mRNA molecules, and effect endonucleolytic cleavage of the mRNA. May play a role in the release non-functional ribosomes and degradation of damaged mRNAs. Has endoribonuclease activity. This is Protein pelota homolog from Pyrobaculum calidifontis (strain DSM 21063 / JCM 11548 / VA1).